The sequence spans 501 residues: Glycerol kinase (501 aa).

Thr17 serves as a coordination point for ADP. The ATP site is built by Thr17, Thr18, and Ser19. Thr17 contributes to the sn-glycerol 3-phosphate binding site. An ADP-binding site is contributed by Arg21. Sn-glycerol 3-phosphate is bound by residues Arg87, Glu88, Tyr139, and Asp243. Glycerol-binding residues include Arg87, Glu88, Tyr139, Asp243, and Gln244. Positions 265 and 308 each coordinate ADP. Thr265, Gly308, Gln312, and Gly409 together coordinate ATP. Residues Gly409 and Asn413 each contribute to the ADP site.

Belongs to the FGGY kinase family.

It catalyses the reaction glycerol + ATP = sn-glycerol 3-phosphate + ADP + H(+). It participates in polyol metabolism; glycerol degradation via glycerol kinase pathway; sn-glycerol 3-phosphate from glycerol: step 1/1. Its activity is regulated as follows. Inhibited by fructose 1,6-bisphosphate (FBP). Functionally, key enzyme in the regulation of glycerol uptake and metabolism. Catalyzes the phosphorylation of glycerol to yield sn-glycerol 3-phosphate. This chain is Glycerol kinase, found in Pseudomonas fluorescens (strain SBW25).